We begin with the raw amino-acid sequence, 233 residues long: MDLNLDAPHSMGTTIIGVTYNGGVVLGADSRTSTGMYVANRASDKITQLTDNVYVCRSGSAADSQVVSDYVRYFLHQHTIQHGQPATVKVSANLIRMLAYNNKNMLQTGLIVGGWDKYEGGKIYGIPLGGTVVEQPFAIGGSGSSYLYGFFDQAWKDNMTKEEAEQLVVKAVSLAIARDGASGGVVRTVIINSEGVTRNFYPGDKLQLWHEELEPQNSLLDILNAAGPEPMAM.

The propeptide at 1 to 12 is removed in mature form; the sequence is MDLNLDAPHSMG. Thr13 acts as the Nucleophile in catalysis.

The protein belongs to the peptidase T1B family. Component of the 20S core complex of the 26S proteasome. The 26S proteasome is composed of a core protease (CP), known as the 20S proteasome, capped at one or both ends by the 19S regulatory particle (RP/PA700). The 20S proteasome core is composed of 28 subunits that are arranged in four stacked rings, resulting in a barrel-shaped structure. The two end rings are each formed by seven alpha subunits, and the two central rings are each formed by seven beta subunits. The catalytic chamber with the active sites is on the inside of the barrel.

It is found in the cytoplasm. Its subcellular location is the nucleus. The catalysed reaction is Cleavage of peptide bonds with very broad specificity.. The proteasome is a multicatalytic proteinase complex which is characterized by its ability to cleave peptides with Arg, Phe, Tyr, Leu, and Glu adjacent to the leaving group at neutral or slightly basic pH. The proteasome has an ATP-dependent proteolytic activity. This Arabidopsis thaliana (Mouse-ear cress) protein is Proteasome subunit beta type-6 (PBA1).